A 644-amino-acid polypeptide reads, in one-letter code: 1-deoxy-D-xylulose-5-phosphate synthase (644 aa).

Thiamine diphosphate-binding positions include H78 and 120–122; that span reads GHA. D149 contributes to the Mg(2+) binding site. Residues 150 to 151, N178, and E373 contribute to the thiamine diphosphate site; that span reads AA. N178 is a Mg(2+) binding site.

The protein belongs to the transketolase family. DXPS subfamily. Homodimer. Requires Mg(2+) as cofactor. The cofactor is thiamine diphosphate.

The enzyme catalyses D-glyceraldehyde 3-phosphate + pyruvate + H(+) = 1-deoxy-D-xylulose 5-phosphate + CO2. It functions in the pathway metabolic intermediate biosynthesis; 1-deoxy-D-xylulose 5-phosphate biosynthesis; 1-deoxy-D-xylulose 5-phosphate from D-glyceraldehyde 3-phosphate and pyruvate: step 1/1. Catalyzes the acyloin condensation reaction between C atoms 2 and 3 of pyruvate and glyceraldehyde 3-phosphate to yield 1-deoxy-D-xylulose-5-phosphate (DXP). The chain is 1-deoxy-D-xylulose-5-phosphate synthase from Chlamydia caviae (strain ATCC VR-813 / DSM 19441 / 03DC25 / GPIC) (Chlamydophila caviae).